The primary structure comprises 507 residues: CWF19-like protein DRN1 (507 aa).

Ser242 is subject to Phosphoserine.

The protein belongs to the CWF19 family. Interacts with DBR1. Interacts with SYF1, a component of the NTC complex. Interacts with lariat-introns and lariat-intermediates.

The protein localises to the nucleus. Its subcellular location is the cytoplasm. In terms of biological role, involved in branched RNA metabolism, modulating the turnover of lariat-intron pre-mRNAs by the lariat-debranching enzyme DBR1. Enhances the debranching activity of DBR1 in vitro. The sequence is that of CWF19-like protein DRN1 (DRN1) from Saccharomyces cerevisiae (strain ATCC 204508 / S288c) (Baker's yeast).